The chain runs to 394 residues: [Pyruvate dehydrogenase (acetyl-transferring)] kinase 1, mitochondrial (394 aa).

Residues Met-1–Arg-20 constitute a mitochondrion transit peptide. The Histidine kinase domain occupies Ala-126–Ser-386. Residue His-148 is modified to Phosphohistidine; by autocatalysis. ATP-binding positions include Glu-267–Glu-274, Asp-304, Ser-323–Thr-324, and Gly-347–Leu-352.

The protein belongs to the PDK/BCKDK protein kinase family. As to quaternary structure, interacts with PKP2.

Its subcellular location is the mitochondrion matrix. The catalysed reaction is L-seryl-[pyruvate dehydrogenase E1 alpha subunit] + ATP = O-phospho-L-seryl-[pyruvate dehydrogenase E1 alpha subunit] + ADP + H(+). Inhibits the mitochondrial pyruvate dehydrogenase complex by phosphorylation of the E1 alpha subunit (PDA1), thus contributing to the regulation of glucose metabolism. Also involved in telomere maintenance. This is [Pyruvate dehydrogenase (acetyl-transferring)] kinase 1, mitochondrial from Saccharomyces cerevisiae (strain ATCC 204508 / S288c) (Baker's yeast).